A 480-amino-acid chain; its full sequence is MAENFGKVIQISGPAVDVQFSETTLPEIYTALRVVSEGFDVPTPINVVLEIQQHLGEGRVRCVAMEPTEGMVRGMKAIDMGGPISVPVGRGTLGRVMNVIGEPVDQLGPIMVEKRNPIHRQAPAFDEQATTAEMFETGIKVIDLIQPFLKGGKIGLFGGAGVGKTVVIQELINNVAKQHGGFSVFGGVGERTREGNDLWLEFTEAGVITPGDPSKSKAALVYGQMTEPPGARLRVALTALTVAEYFRDEEGTDTLLFIDNIFRFTQAGSEVSTLLGRMPSAVGYQPNLATEMGELQERITSTKRGSVTSVQAIYVPADDLTDPAPATTFAHLDATTVLSRALTEIGIYPAVDPLGSTSRILDPRIVGQEHYDVAQGVKGILQQYKDLQDIIAILGIDELSEDQKLTVSRARKIQRFLSQPFHVAEQFTGFPGRYVKIADTVRSFREILQGKHDEIPEQAFYMKGTIDEVHEAAEKMKANA.

158–165 (GGAGVGKT) contacts ATP.

This sequence belongs to the ATPase alpha/beta chains family. As to quaternary structure, F-type ATPases have 2 components, CF(1) - the catalytic core - and CF(0) - the membrane proton channel. CF(1) has five subunits: alpha(3), beta(3), gamma(1), delta(1), epsilon(1). CF(0) has three main subunits: a(1), b(2) and c(9-12). The alpha and beta chains form an alternating ring which encloses part of the gamma chain. CF(1) is attached to CF(0) by a central stalk formed by the gamma and epsilon chains, while a peripheral stalk is formed by the delta and b chains.

The protein resides in the cell inner membrane. The catalysed reaction is ATP + H2O + 4 H(+)(in) = ADP + phosphate + 5 H(+)(out). In terms of biological role, produces ATP from ADP in the presence of a proton gradient across the membrane. The catalytic sites are hosted primarily by the beta subunits. In Koribacter versatilis (strain Ellin345), this protein is ATP synthase subunit beta.